Here is a 135-residue protein sequence, read N- to C-terminus: MFAKSATIAIVLAALAGFSAAVPTADCRTSKTCSSGKVALVAPAAPVGSCSTGKVQCCNSVEHSTQPHVNNLLLGLEHFGLVKGLIGGLTGNVGIQCSPLLLSGNSCTAQTACCENVHFNGLIAVGCSPVNLSLL.

The N-terminal stretch at 1–21 (MFAKSATIAIVLAALAGFSAA) is a signal peptide. 4 disulfide bridges follow: cysteine 50–cysteine 113, cysteine 57–cysteine 107, cysteine 58–cysteine 97, and cysteine 114–cysteine 127. Asparagine 131 is a glycosylation site (N-linked (GlcNAc...) asparagine).

This sequence belongs to the fungal hydrophobin family. In terms of assembly, self-assembles to form functional amyloid fibrils called rodlets. Self-assembly into fibrillar rodlets occurs spontaneously at hydrophobic:hydrophilic interfaces and the rodlets further associate laterally to form amphipathic monolayers.

The protein localises to the secreted. It localises to the cell wall. Its function is as follows. Aerial growth, conidiation, and dispersal of filamentous fungi in the environment rely upon a capability of their secreting small amphipathic proteins called hydrophobins (HPBs) with low sequence identity. Class I can self-assemble into an outermost layer of rodlet bundles on aerial cell surfaces, conferring cellular hydrophobicity that supports fungal growth, development and dispersal; whereas Class II form highly ordered films at water-air interfaces through intermolecular interactions but contribute nothing to the rodlet structure. This is Class I hydrophobin 15 from Pleurotus ostreatus (strain PC15) (Oyster mushroom).